Consider the following 514-residue polypeptide: Probable cysteine protease ATG4 (514 aa).

The segment covering 1-15 (MAREDASVPRSHDSA) has biased composition (basic and acidic residues). 2 disordered regions span residues 1 to 28 (MARE…EIPV) and 61 to 84 (DSSD…DSAQ). C166 acts as the Nucleophile in catalysis. Active-site residues include D336 and H338. A disordered region spans residues 461–514 (ATPSAEDTVPVSTLSASESEITTSSYETPTSKDDNSSRASLDVVVLDTTGEQQE). The span at 472–489 (STLSASESEITTSSYETP) shows a compositional bias: low complexity.

This sequence belongs to the peptidase C54 family.

It is found in the cytoplasm. It localises to the nucleus. The protein resides in the preautophagosomal structure. The enzyme catalyses [protein]-C-terminal L-amino acid-glycyl-phosphatidylethanolamide + H2O = [protein]-C-terminal L-amino acid-glycine + a 1,2-diacyl-sn-glycero-3-phosphoethanolamine. In terms of biological role, cysteine protease that plays a key role in cytoplasm to vacuole transport (Cvt) and autophagy by mediating both proteolytic activation and delipidation of ATG8. Required for selective autophagic degradation of the nucleus (nucleophagy) as well as for mitophagy which contributes to regulate mitochondrial quantity and quality by eliminating the mitochondria to a basal level to fulfill cellular energy requirements and preventing excess ROS production. The protease activity is required for proteolytic activation of ATG8: cleaves the C-terminal amino acid of ATG8 to reveal a C-terminal glycine. ATG8 ubiquitin-like activity requires the exposure of the glycine at the C-terminus for its conjugation to phosphatidylethanolamine (PE) and its insertion to membranes, which is necessary for autophagy. The ATG8-PE conjugate mediates tethering between adjacent membranes and stimulates membrane hemifusion, leading to expansion of the autophagosomal membrane during autophagy. In addition to the protease activity, also catalyzes deconjugation of PE-conjugated forms of ATG8 during macroautophagy: ATG8 delipidation is required to release the protein from membranes, which facilitates multiple events during macroautophagy, and especially for efficient autophagosome biogenesis, the assembly of ATG9-containing tubulovesicular clusters into phagophores/autophagosomes, and for the disassembly of PAS-associated ATG components. ATG8 delipidation by ATG4 also recycles ATG8-PE generated on inappropriate membranes to maintain a reservoir of unlipidated ATG8 that is required for autophagosome formation at the PAS. The polypeptide is Probable cysteine protease ATG4 (ATG4) (Scheffersomyces stipitis (strain ATCC 58785 / CBS 6054 / NBRC 10063 / NRRL Y-11545) (Yeast)).